The following is a 408-amino-acid chain: UPF0754 membrane protein Tery_3973 (408 aa).

2 consecutive transmembrane segments (helical) span residues 4–24 (IWLY…TNDI) and 385–405 (IVNL…ILLV).

Belongs to the UPF0754 family.

It localises to the cell inner membrane. This Trichodesmium erythraeum (strain IMS101) protein is UPF0754 membrane protein Tery_3973.